We begin with the raw amino-acid sequence, 171 residues long: 3-hydroxydecanoyl-[acyl-carrier-protein] dehydratase (171 aa).

His70 is an active-site residue.

Belongs to the thioester dehydratase family. FabA subfamily. As to quaternary structure, homodimer.

It localises to the cytoplasm. It catalyses the reaction a (3R)-hydroxyacyl-[ACP] = a (2E)-enoyl-[ACP] + H2O. The catalysed reaction is (3R)-hydroxydecanoyl-[ACP] = (2E)-decenoyl-[ACP] + H2O. It carries out the reaction (2E)-decenoyl-[ACP] = (3Z)-decenoyl-[ACP]. It participates in lipid metabolism; fatty acid biosynthesis. Necessary for the introduction of cis unsaturation into fatty acids. Catalyzes the dehydration of (3R)-3-hydroxydecanoyl-ACP to E-(2)-decenoyl-ACP and then its isomerization to Z-(3)-decenoyl-ACP. Can catalyze the dehydratase reaction for beta-hydroxyacyl-ACPs with saturated chain lengths up to 16:0, being most active on intermediate chain length. This chain is 3-hydroxydecanoyl-[acyl-carrier-protein] dehydratase, found in Shewanella sp. (strain MR-4).